The following is a 304-amino-acid chain: Aspartate carbamoyltransferase catalytic subunit (304 aa).

2 residues coordinate carbamoyl phosphate: arginine 49 and threonine 50. L-aspartate is bound at residue lysine 77. Carbamoyl phosphate-binding residues include arginine 99, histidine 127, and glutamine 130. The L-aspartate site is built by arginine 160 and arginine 211. Carbamoyl phosphate is bound by residues alanine 252 and proline 253.

Belongs to the aspartate/ornithine carbamoyltransferase superfamily. ATCase family. Heterododecamer (2C3:3R2) of six catalytic PyrB chains organized as two trimers (C3), and six regulatory PyrI chains organized as three dimers (R2).

The catalysed reaction is carbamoyl phosphate + L-aspartate = N-carbamoyl-L-aspartate + phosphate + H(+). The protein operates within pyrimidine metabolism; UMP biosynthesis via de novo pathway; (S)-dihydroorotate from bicarbonate: step 2/3. Its function is as follows. Catalyzes the condensation of carbamoyl phosphate and aspartate to form carbamoyl aspartate and inorganic phosphate, the committed step in the de novo pyrimidine nucleotide biosynthesis pathway. This chain is Aspartate carbamoyltransferase catalytic subunit, found in Bacillus cereus (strain ATCC 10987 / NRS 248).